A 1193-amino-acid polypeptide reads, in one-letter code: Pyruvate carboxylase (1193 aa).

Residues 41 to 493 enclose the Biotin carboxylation domain; that stretch reads QFQKILVANR…WTTFIDDTPE (453 aa). 3 residues coordinate ATP: Lys159, Glu243, and His278. One can recognise an ATP-grasp domain in the interval 163 to 360; the sequence is RQLAIRCNVP…IVAAQIQIAA (198 aa). Residue Arg335 is part of the active site. Residues 579–847 form the Pyruvate carboxyltransferase domain; sequence CLIMDTTWRD…DPGLNSAHVR (269 aa). Residues 587 to 591 and Arg660 each bind substrate; that span reads RDAHQ. Residue Asp588 participates in a divalent metal cation binding. Residues Lys756, His786, and His788 each coordinate a divalent metal cation. Position 756 is an N6-carboxylysine (Lys756). Position 921 (Thr921) interacts with substrate. Positions 1116-1191 constitute a Biotinyl-binding domain; it reads KADVGDSSQV…DGQDLVCKIT (76 aa). Residue Lys1157 is modified to N6-biotinyllysine.

The cofactor is biotin. It depends on Zn(2+) as a cofactor.

It is found in the cytoplasm. The catalysed reaction is hydrogencarbonate + pyruvate + ATP = oxaloacetate + ADP + phosphate + H(+). It functions in the pathway carbohydrate biosynthesis; gluconeogenesis. Pyruvate carboxylase catalyzes a 2-step reaction, involving the ATP-dependent carboxylation of the covalently attached biotin in the first step and the transfer of the carboxyl group to pyruvate in the second. This is Pyruvate carboxylase (pyc) from Aspergillus terreus.